The chain runs to 1102 residues: Putative helicase/primase complex protein (1102 aa).

Disordered regions lie at residues 1031 to 1057 (TKEE…EETC) and 1082 to 1102 (EETC…FTET).

Belongs to the asfivirus F1055L family.

In terms of biological role, may be involved in DNA replication. The polypeptide is Putative helicase/primase complex protein (African swine fever virus (isolate Tick/Malawi/Lil 20-1/1983) (ASFV)).